The primary structure comprises 208 residues: Small ribosomal subunit protein uS4 (208 aa).

Residues 28 to 48 are disordered; sequence YFEKRPYPPGEHGRARRRTES. An S4 RNA-binding domain is found at 95–159; it reads MRLDALVLRS…ARTPFQVAAA (65 aa).

It belongs to the universal ribosomal protein uS4 family. As to quaternary structure, part of the 30S ribosomal subunit. Contacts protein S5. The interaction surface between S4 and S5 is involved in control of translational fidelity.

Functionally, one of the primary rRNA binding proteins, it binds directly to 16S rRNA where it nucleates assembly of the body of the 30S subunit. With S5 and S12 plays an important role in translational accuracy. The chain is Small ribosomal subunit protein uS4 from Beutenbergia cavernae (strain ATCC BAA-8 / DSM 12333 / CCUG 43141 / JCM 11478 / NBRC 16432 / NCIMB 13614 / HKI 0122).